A 590-amino-acid chain; its full sequence is Auxin response factor 20 (590 aa).

Positions 126 to 224 (FTKVLTASDT…ELRVGIRRAR (99 aa)) form a DNA-binding region, TF-B3. In terms of domain architecture, PB1 spans 495–576 (RTCTKVQMQG…MVKKILIYSK (82 aa)).

It belongs to the ARF family. Homodimers and heterodimers.

Its subcellular location is the nucleus. Auxin response factors (ARFs) are transcriptional factors that bind specifically to the DNA sequence 5'-TGTCTC-3' found in the auxin-responsive promoter elements (AuxREs). Could act as transcriptional activator or repressor. Formation of heterodimers with Aux/IAA proteins may alter their ability to modulate early auxin response genes expression. The sequence is that of Auxin response factor 20 (ARF20) from Arabidopsis thaliana (Mouse-ear cress).